Here is a 384-residue protein sequence, read N- to C-terminus: Succinyl-diaminopimelate desuccinylase (384 aa).

Zn(2+) is bound at residue His-71. Asp-73 is a catalytic residue. A Zn(2+)-binding site is contributed by Asp-104. Glu-139 (proton acceptor) is an active-site residue. Zn(2+)-binding residues include Glu-140, Glu-168, and His-357.

It belongs to the peptidase M20A family. DapE subfamily. In terms of assembly, homodimer. It depends on Zn(2+) as a cofactor. Co(2+) serves as cofactor.

It catalyses the reaction N-succinyl-(2S,6S)-2,6-diaminopimelate + H2O = (2S,6S)-2,6-diaminopimelate + succinate. The protein operates within amino-acid biosynthesis; L-lysine biosynthesis via DAP pathway; LL-2,6-diaminopimelate from (S)-tetrahydrodipicolinate (succinylase route): step 3/3. In terms of biological role, catalyzes the hydrolysis of N-succinyl-L,L-diaminopimelic acid (SDAP), forming succinate and LL-2,6-diaminopimelate (DAP), an intermediate involved in the bacterial biosynthesis of lysine and meso-diaminopimelic acid, an essential component of bacterial cell walls. The chain is Succinyl-diaminopimelate desuccinylase from Afipia carboxidovorans (strain ATCC 49405 / DSM 1227 / KCTC 32145 / OM5) (Oligotropha carboxidovorans).